A 291-amino-acid chain; its full sequence is MGISKKSQLVPLLAFITMFLMVVSRVSSSIADANSLHFSFSQFSQNPKDLILQGDATTDSDGNLQLTRVSSDGSPQGSSVGRALFYAPVHIWEKSAVVASFDATFTFLIKSPDRDPADGITFFIANTDTSIPSGSGGRLLGLFPDANIIKNSTNLDFNAAYNADTIVAVELDSYPNTDIGDPSYPHIGIDIKSIRSKSTARWNMQTGKVGTAHISYNSVAKRLSAVVSYSGTSSTTVSYDVDLNNVLPEWVRVGLSATTGLYKETNTILSWSFTSKLKTNQLQDLRIASVV.

An N-terminal signal peptide occupies residues 1–28 (MGISKKSQLVPLLAFITMFLMVVSRVSS). Residue Asp118 coordinates Ca(2+). Arg138 provides a ligand contact to a carbohydrate. The propeptide at 147–162 (NIIKNSTNLDFNAAYN) is removed in mature form. Residues Glu170 and Asp172 each contribute to the Mn(2+) site. Asp172, Tyr174, Asn176, and Asp181 together coordinate Ca(2+). Residue Tyr174 participates in a carbohydrate binding. Positions 181 and 186 each coordinate Mn(2+). Position 208 (Lys208) interacts with Ca(2+). A carbohydrate is bound at residue Ser228. Residues 281–291 (QLQDLRIASVV) constitute a propeptide, removed in mature form.

It belongs to the leguminous lectin family. In terms of processing, the mature chain consists of residues 163-280 followed by residues 29-147. Concanavalin A-like lectins of the Diocleinae subtribe undergo proteolytic processing referred to as circular permutation. The propeptide is split into an N-terminal and a C-terminal part, the gamma and beta chain, respectively. These are then religated in beta-gamma order to form the mature alpha chain. The beta and gamma chains can often be detected in cell extracts.

In terms of biological role, D-mannose-binding lectin that also binds alpha-methyl-D-mannoside with even higher affinity. Has hemagglutinating activity against rabbit erythrocytes. Shows toxicity against the brine shrimp A.nauplii. Induces reversible paw edema and hypernociceptivity in rats. In Dioclea lasiophylla, this protein is Lectin.